Consider the following 151-residue polypeptide: Ribonuclease H (151 aa).

In terms of domain architecture, RNase H type-1 spans 2 to 143 (SDDWVEIYTD…ADLLANRGVV (142 aa)). Positions 11, 49, 71, and 135 each coordinate Mg(2+).

Belongs to the RNase H family. Monomer. The cofactor is Mg(2+).

It localises to the cytoplasm. It carries out the reaction Endonucleolytic cleavage to 5'-phosphomonoester.. Functionally, endonuclease that specifically degrades the RNA of RNA-DNA hybrids. The polypeptide is Ribonuclease H (Stutzerimonas stutzeri (strain A1501) (Pseudomonas stutzeri)).